The chain runs to 595 residues: Protein alan shepard (595 aa).

Residues 1–12 are compositionally biased toward pro residues; it reads MHPRYSPAPPPH. A disordered region spans residues 1–82; it reads MHPRYSPAPP…ASVAAAPPTP (82 aa). The residue at position 5 (Y5) is a Phosphotyrosine. Residues 13–31 show a composition bias toward low complexity; it reads QQQQQQQQQPMGGPHQQQS. Residues 32-43 are compositionally biased toward gly residues; that stretch reads AGGGPGHGGGAS. A compositionally biased stretch (polar residues) spans 50-68; it reads PNSQQLPPQMPRSQNYANG. Over residues 69–78 the composition is skewed to low complexity; sequence SSSAASVAAA. Residues Y138 and Y154 each carry the phosphotyrosine modification. A disordered region spans residues 184–238; it reads RVPTAASPSNTNSSSSSNTGSQSGTLSTSLSNTTNTNTTMGPNGTAQNQNQQGGE. Over residues 190-238 the composition is skewed to low complexity; the sequence is SPSNTNSSSSSNTGSQSGTLSTSLSNTTNTNTTMGPNGTAQNQNQQGGE. RRM domains are found at residues 243-316 and 322-401; these read TNLY…MAKQ and TNLY…FADG. The disordered stretch occupies residues 569-595; it reads MTDSEQASTAASPDEAYTQYPHQAAPK.

Has a role in the perception of gravity. The protein is Protein alan shepard of Drosophila virilis (Fruit fly).